The following is a 503-amino-acid chain: Discoidin, CUB and LCCL domain-containing protein 1 (503 aa).

A signal peptide spans 1-25 (MGTGAGGPSVLALLFAVCAPLRLQA). The Extracellular portion of the chain corresponds to 26–250 (EELGDGCGHI…FTTPGMNITT (225 aa)). Cystine bridges form between C32–C59, C85–C103, C149–C165, and C169–C191. Residues 32 to 141 (CGHIVTSQDS…RGFLLTYASS (110 aa)) enclose the CUB domain. A glycan (N-linked (GlcNAc...) asparagine) is linked at N55. Positions 143–239 (HPDLITCLER…RHGSLSEKRF (97 aa)) constitute an LCCL domain. The N-linked (GlcNAc...) asparagine glycan is linked to N247. A helical transmembrane segment spans residues 251 to 271 (VAIPSVIFIALLLTGMGIFAI). Over 272–503 (CRKRKKKGNP…LNQTAMTALL (232 aa)) the chain is Cytoplasmic. Residue S305 is modified to Phosphoserine. T406 carries the phosphothreonine modification. The segment at 410–503 (QSGYRVPGPR…LNQTAMTALL (94 aa)) is disordered. Residues 494–503 (LNQTAMTALL) show a composition bias toward polar residues.

It is found in the membrane. This is Discoidin, CUB and LCCL domain-containing protein 1 (Dcbld1) from Mus musculus (Mouse).